We begin with the raw amino-acid sequence, 394 residues long: MTSILTNNSAMAALSTLRSISSSMEDTQSRISSGLRVGSASDNAAYWSIATTMRSDNQALSAVQDALGLGAAKVDTAYSGMESAIEVVKEIKAKLVAATEDGVDKAKIQEEITQLKDQLTSIAEAASFSGENWLQADLSGGPVTKSVVGGFVRDSSGAVSVKKVDYSLNTDTVLFDTTGNTGILDKVYNVSQASVTLPVNVNGTTSEYTVGAYNVDDLIDASATFDGDYANVGAGALAGDYVKVQGSWVKAVDVAATGQEVVYDDGTTKWGVDTTVTGAPATNVAAPASIATIDITIAAQAGNLDALIAGVDEALTDMTSAAASLGSISSRIDLQSDFVNKLSDSIDSGVGRLVDADMNEESTRLKALQTQQQLAIQALSIANSDSQNVLSLFR.

Belongs to the bacterial flagellin family.

The protein localises to the secreted. It is found in the bacterial flagellum. In terms of biological role, flagellin is the subunit protein which polymerizes to form the filaments of bacterial flagella. Homomer of FlaA is able to form a functional filament. The polypeptide is Flagellin A (flaA) (Rhizobium meliloti (strain 1021) (Ensifer meliloti)).